Consider the following 192-residue polypeptide: dTTP/UTP pyrophosphatase (192 aa).

Asp70 (proton acceptor) is an active-site residue.

It belongs to the Maf family. YhdE subfamily. The cofactor is a divalent metal cation.

It localises to the cytoplasm. It catalyses the reaction dTTP + H2O = dTMP + diphosphate + H(+). The catalysed reaction is UTP + H2O = UMP + diphosphate + H(+). In terms of biological role, nucleoside triphosphate pyrophosphatase that hydrolyzes dTTP and UTP. May have a dual role in cell division arrest and in preventing the incorporation of modified nucleotides into cellular nucleic acids. The sequence is that of dTTP/UTP pyrophosphatase from Clostridium perfringens (strain SM101 / Type A).